Reading from the N-terminus, the 561-residue chain is Urocanate hydratase (561 aa).

Residues 52–53 (GG), Gln-130, 176–178 (GMG), Glu-196, Arg-201, 242–243 (NA), 263–267 (QTSAH), 273–274 (YL), and Tyr-322 each bind NAD(+). Cys-410 is a catalytic residue. Gly-492 serves as a coordination point for NAD(+).

Belongs to the urocanase family. It depends on NAD(+) as a cofactor.

It is found in the cytoplasm. It carries out the reaction 4-imidazolone-5-propanoate = trans-urocanate + H2O. It functions in the pathway amino-acid degradation; L-histidine degradation into L-glutamate; N-formimidoyl-L-glutamate from L-histidine: step 2/3. Catalyzes the conversion of urocanate to 4-imidazolone-5-propionate. In Citrobacter koseri (strain ATCC BAA-895 / CDC 4225-83 / SGSC4696), this protein is Urocanate hydratase.